The primary structure comprises 637 residues: 1-deoxy-D-xylulose-5-phosphate synthase (637 aa).

Residues H71 and S112–A114 each bind thiamine diphosphate. Mg(2+) is bound at residue D144. Residues G145–A146, N173, Y284, and E365 contribute to the thiamine diphosphate site. Residue N173 participates in Mg(2+) binding.

It belongs to the transketolase family. DXPS subfamily. Homodimer. Mg(2+) serves as cofactor. It depends on thiamine diphosphate as a cofactor.

The enzyme catalyses D-glyceraldehyde 3-phosphate + pyruvate + H(+) = 1-deoxy-D-xylulose 5-phosphate + CO2. It participates in metabolic intermediate biosynthesis; 1-deoxy-D-xylulose 5-phosphate biosynthesis; 1-deoxy-D-xylulose 5-phosphate from D-glyceraldehyde 3-phosphate and pyruvate: step 1/1. In terms of biological role, catalyzes the acyloin condensation reaction between C atoms 2 and 3 of pyruvate and glyceraldehyde 3-phosphate to yield 1-deoxy-D-xylulose-5-phosphate (DXP). The sequence is that of 1-deoxy-D-xylulose-5-phosphate synthase from Mycolicibacterium gilvum (strain PYR-GCK) (Mycobacterium gilvum (strain PYR-GCK)).